Reading from the N-terminus, the 412-residue chain is Imidazolonepropionase (412 aa).

Residues histidine 76 and histidine 78 each contribute to the Fe(3+) site. Zn(2+)-binding residues include histidine 76 and histidine 78. 4-imidazolone-5-propanoate contacts are provided by arginine 85, tyrosine 148, and histidine 181. Tyrosine 148 contacts N-formimidoyl-L-glutamate. Histidine 242 contributes to the Fe(3+) binding site. Histidine 242 provides a ligand contact to Zn(2+). 4-imidazolone-5-propanoate is bound at residue glutamate 245. Position 317 (aspartate 317) interacts with Fe(3+). Residue aspartate 317 coordinates Zn(2+). Positions 319 and 321 each coordinate N-formimidoyl-L-glutamate. A 4-imidazolone-5-propanoate-binding site is contributed by serine 322.

It belongs to the metallo-dependent hydrolases superfamily. HutI family. Zn(2+) serves as cofactor. The cofactor is Fe(3+).

It localises to the cytoplasm. It catalyses the reaction 4-imidazolone-5-propanoate + H2O = N-formimidoyl-L-glutamate. The protein operates within amino-acid degradation; L-histidine degradation into L-glutamate; N-formimidoyl-L-glutamate from L-histidine: step 3/3. Its function is as follows. Catalyzes the hydrolytic cleavage of the carbon-nitrogen bond in imidazolone-5-propanoate to yield N-formimidoyl-L-glutamate. It is the third step in the universal histidine degradation pathway. The polypeptide is Imidazolonepropionase (Staphylococcus aureus (strain USA300 / TCH1516)).